A 730-amino-acid polypeptide reads, in one-letter code: Phosphoribosylformylglycinamidine synthase subunit PurL (730 aa).

The active site involves His-44. 2 residues coordinate ATP: Tyr-47 and Lys-86. Glu-88 contacts Mg(2+). Substrate contacts are provided by residues Ser-89–His-92 and Arg-111. The Proton acceptor role is filled by His-90. Asp-112 is a binding site for Mg(2+). Substrate is bound at residue Gln-235. Residue Asp-263 participates in Mg(2+) binding. Substrate is bound at residue Glu-307–Gln-309. ATP contacts are provided by Asn-489 and Gly-526. Residue Asn-527 coordinates Mg(2+). Position 529 (Ser-529) interacts with substrate.

It belongs to the FGAMS family. As to quaternary structure, monomer. Part of the FGAM synthase complex composed of 1 PurL, 1 PurQ and 2 PurS subunits.

It is found in the cytoplasm. It carries out the reaction N(2)-formyl-N(1)-(5-phospho-beta-D-ribosyl)glycinamide + L-glutamine + ATP + H2O = 2-formamido-N(1)-(5-O-phospho-beta-D-ribosyl)acetamidine + L-glutamate + ADP + phosphate + H(+). The protein operates within purine metabolism; IMP biosynthesis via de novo pathway; 5-amino-1-(5-phospho-D-ribosyl)imidazole from N(2)-formyl-N(1)-(5-phospho-D-ribosyl)glycinamide: step 1/2. Functionally, part of the phosphoribosylformylglycinamidine synthase complex involved in the purines biosynthetic pathway. Catalyzes the ATP-dependent conversion of formylglycinamide ribonucleotide (FGAR) and glutamine to yield formylglycinamidine ribonucleotide (FGAM) and glutamate. The FGAM synthase complex is composed of three subunits. PurQ produces an ammonia molecule by converting glutamine to glutamate. PurL transfers the ammonia molecule to FGAR to form FGAM in an ATP-dependent manner. PurS interacts with PurQ and PurL and is thought to assist in the transfer of the ammonia molecule from PurQ to PurL. In Pelagibacter ubique (strain HTCC1062), this protein is Phosphoribosylformylglycinamidine synthase subunit PurL.